A 267-amino-acid chain; its full sequence is Heme-containing CO-sensing transcriptional regulator RcoM 1 (267 aa).

The PAS domain maps to 15–86 (RAETFQHKLE…KSRDKLRFLL (72 aa)). Heme contacts are provided by His74 and Met104. One can recognise an HTH LytTR-type domain in the interval 161 to 266 (IPVYRKNRVI…TAQLKELLGV (106 aa)).

It depends on heme as a cofactor.

It localises to the cytoplasm. Its function is as follows. One-component, b-type heme-containing aerobic sensor and transcriptional regulator that responds to CO by activating the expression of the oxidation operon cox. This Paraburkholderia xenovorans (strain LB400) protein is Heme-containing CO-sensing transcriptional regulator RcoM 1 (rcoM1).